Here is a 307-residue protein sequence, read N- to C-terminus: Protein YIF1A (307 aa).

The tract at residues 1-42 (MNFQQQGYRATKPRARASPPTGGPMLFDDTSSGPPPMNNQNY) is disordered. The Cytoplasmic segment spans residues 1-148 (MNFQQQGYRA…TPRHDVNAPD (148 aa)). A helical membrane pass occupies residues 149-169 (LYIPTMAFITYILLAGMALGI). The Lumenal portion of the chain corresponds to 170-184 (QKRFSPEVLGLCAST). Residues 185–205 (ALVWMIIEVLVMLLSLYLLTV) form a helical membrane-spanning segment. Residues 206–213 (HTDLSTFD) are Cytoplasmic-facing. A helical membrane pass occupies residues 214 to 236 (LVAYSGYKYVGMILTVFCGLLFG). Residues 237–239 (SDG) are Lumenal-facing. The helical transmembrane segment at 240-259 (YYVALAWSSCALMFFIVRSL) threads the bilayer. Over 260–285 (KMKILSSISADSMGAGASAKPRFRLY) the chain is Cytoplasmic. A helical transmembrane segment spans residues 286–306 (ITVASAAFQPFIIYWLTAHLV).

Belongs to the YIF1 family.

It localises to the endoplasmic reticulum membrane. The protein localises to the golgi apparatus membrane. It is found in the endoplasmic reticulum-Golgi intermediate compartment membrane. Functionally, possible role in transport between endoplasmic reticulum and Golgi. The protein is Protein YIF1A (yif1a) of Danio rerio (Zebrafish).